We begin with the raw amino-acid sequence, 447 residues long: 2-oxoadipate dioxygenase/decarboxylase (447 aa).

2-oxoadipate is bound by residues His68, Arg72, and His224. His68 provides a ligand contact to Fe(2+). 2 residues coordinate Fe(2+): His224 and Glu290. A 2-oxoadipate-binding site is contributed by Val391.

This sequence belongs to the 2-oxoadipate dioxygenase/decarboxylase family. Fe(2+) serves as cofactor.

The enzyme catalyses 2-oxoadipate + O2 = (R)-2-hydroxyglutarate + CO2. Functionally, catalyzes the decarboxylation and hydroxylation of 2-oxoadipate (2OA) to form D-2-hydroxyglutarate (D-2-HGA). The protein is 2-oxoadipate dioxygenase/decarboxylase of Shigella flexneri.